A 630-amino-acid polypeptide reads, in one-letter code: Transcription factor MYC1 (630 aa).

Disordered regions lie at residues 356-398 and 430-463; these read FGDS…NNEE and VKEA…EAER. Over residues 440 to 449 the composition is skewed to basic residues; that stretch reads KPRKRGRKPA. The segment covering 450–463 has biased composition (basic and acidic residues); the sequence is NGREEPLNHVEAER. The interval 453-466 is basic motif; degenerate; sequence EEPLNHVEAERQRR. A bHLH domain is found at 453–502; sequence EEPLNHVEAERQRREKLNQRFYALRAVVPNVSKMDKASLLGDAIAYINEL. The tract at residues 467 to 502 is helix-loop-helix motif; the sequence is EKLNQRFYALRAVVPNVSKMDKASLLGDAIAYINEL.

As to expression, highly expressed in trichomes and at lower levels in leaves and flowers. Expressed at low levels in roots, stems, leaves, flowers and fruits.

It is found in the nucleus. Functionally, transcriptional activator that binds to the G-box motif (5'-AACGTG-3') found in a number of promoters of jasmonate-induced genes. Transcription activator involved in the transcriptional regulation of terpene biosynthesis in glandular trichomes. Binds to the promoter of the linalool synthase TPS5 and promotes TPS5 gene transactivation. Acts synergistically with EOT1 in the transactivation of TPS5. Involved in type VI glandular trichome development. Involved in the activation of terpene synthases required for volatile mono- and sesquiterpenes synthesis by the glandular cells of type VI trichomes. This Solanum lycopersicum (Tomato) protein is Transcription factor MYC1.